We begin with the raw amino-acid sequence, 31 residues long: Cyclotide mra3 (31 aa).

3 cysteine pairs are disulfide-bonded: Cys-5-Cys-21, Cys-9-Cys-23, and Cys-14-Cys-28.

This is a cyclic peptide. In terms of processing, contains 3 disulfide bonds.

Functionally, probably participates in a plant defense mechanism. The sequence is that of Cyclotide mra3 from Melicytus ramiflorus (Whitey wood).